A 119-amino-acid chain; its full sequence is Large ribosomal subunit protein bL20c (119 aa).

Belongs to the bacterial ribosomal protein bL20 family.

It localises to the plastid. The protein localises to the chloroplast. Its function is as follows. Binds directly to 23S ribosomal RNA and is necessary for the in vitro assembly process of the 50S ribosomal subunit. It is not involved in the protein synthesizing functions of that subunit. In Lolium perenne (Perennial ryegrass), this protein is Large ribosomal subunit protein bL20c.